The primary structure comprises 668 residues: COBRA-like protein 11 (668 aa).

A signal peptide spans 1–29; the sequence is MKKLRYVHLNLLLLLLPLINLQFPTLSLA. Residues asparagine 69, asparagine 125, asparagine 254, asparagine 318, asparagine 329, asparagine 358, asparagine 412, asparagine 432, asparagine 473, asparagine 552, asparagine 560, and asparagine 579 are each glycosylated (N-linked (GlcNAc...) asparagine). Serine 636 is lipidated: GPI-anchor amidated serine. Positions 637-668 are cleaved as a propeptide — removed in mature form; the sequence is SGMRLSGIRFLPSILLAITTFHAITDRLLTGV.

It belongs to the COBRA family. As to expression, mostly expressed in flowers, stamen, anthers and pollen, and, to a lower extent, possibly in roots, stems, leaves and siliques.

Its subcellular location is the cell membrane. In terms of biological role, involved in the deposition of apical pectin cap and cellulose microfibrils in pollen tubes. Implicated in pollen tubes growth in the female transmitting tract of pistil and toward micropyles, via the perception of ovule guidance cues. In Arabidopsis thaliana (Mouse-ear cress), this protein is COBRA-like protein 11.